Here is a 153-residue protein sequence, read N- to C-terminus: General odorant-binding protein lush (153 aa).

A signal peptide spans 1 to 29 (MKHWKRRSSAVFAIVLQVLVLLLPDPAVA). 3 cysteine pairs are disulfide-bonded: Cys46–Cys79, Cys75–Cys132, and Cys121–Cys141. Positions 81 and 86 each coordinate 1-propanol. Ser81 and Thr86 together coordinate butan-1-ol. Positions 81 and 86 each coordinate ethanol.

It belongs to the PBP/GOBP family. In terms of tissue distribution, specifically expressed in chemosensory system in both males and females. Expressed in a subset of trichoid chemosensory sensilla located on the ventral-lateral surface of the third antennal segment. Secreted from non-neuronal support cells into the sensillum lymph that bathes the olfactory neurons within these sensilla.

It localises to the secreted. Functionally, odorant-binding protein required for olfactory behavior and for activity of pheromone-sensitive neurons. Binds to alcohols and mediates avoidance behavior to high concentrations of alcohols, the alcohol-binding possibly resulting in activation of receptors on T2B neurons, the activation of these receptors inhibiting these neurons. Acts in concert with Snmp and lush to capture cVA molecules on the surface of Or67d expressing olfactory dendrites and facilitate their transfer to the odorant-receptor Orco complex. Required for cVA response, probably by binding to VA. May act by serving as an adapter that bridges the presence of gaseous pheromone molecules, cVA, to activation of specific neuronal receptors expressed on T1 olfactory neurons, possibly via a specific conformational change induced by cVA that in turn activates T1 receptors. T1 neurons are excited by the pheromone VA, while T2 neurons are inhibited by alcohols. Also binds to phthalates. This Drosophila melanogaster (Fruit fly) protein is General odorant-binding protein lush (lush).